The primary structure comprises 168 residues: MKCPYCGFAQDRVVDSRESKEADSIRRRRECERCNKRFTTYERIDEIPYMVVKKDGRREKFDRHKVLSGLLRACEKRPISATKLENLVDETEAYLMDSAERERSTTEIGLLLMEKLKQLDTVSYIRFASVYRDFKDVNEFKEELEQLLTSKEPLSRRRTGKAGSAQDE.

Residues 3–34 (CPYCGFAQDRVVDSRESKEADSIRRRRECERC) fold into a zinc finger. Residues 49-139 (YMVVKKDGRR…VYRDFKDVNE (91 aa)) enclose the ATP-cone domain.

It belongs to the NrdR family. Zn(2+) serves as cofactor.

Functionally, negatively regulates transcription of bacterial ribonucleotide reductase nrd genes and operons by binding to NrdR-boxes. In Acidobacterium capsulatum (strain ATCC 51196 / DSM 11244 / BCRC 80197 / JCM 7670 / NBRC 15755 / NCIMB 13165 / 161), this protein is Transcriptional repressor NrdR.